A 305-amino-acid chain; its full sequence is Serine/threonine-protein kinase 16 (305 aa).

The N-myristoyl glycine moiety is linked to residue Gly-2. Residues Cys-6 and Cys-8 are each lipidated (S-palmitoyl cysteine). The Protein kinase domain maps to 20-293; that stretch reads YLFIQKLGEG…PLLLSQLEAL (274 aa). ATP contacts are provided by residues 26-34 and Lys-49; that span reads LGEGGFSYV. Asp-148 acts as the Proton acceptor in catalysis. The tract at residues 166-202 is activation loop; sequence DLGSMNQACIHVEGSRQALTLQDWAAQRCTISYRAPE. A Phosphothreonine; by autocatalysis modification is found at Thr-185. A Phosphoserine; by autocatalysis modification is found at Ser-197. Tyr-198 carries the post-translational modification Phosphotyrosine; by autocatalysis.

The protein belongs to the protein kinase superfamily. Ser/Thr protein kinase family. In terms of assembly, monomer. Interacts with DRG1 (via its N-terminal); the interaction phosphorylates DRG1. In terms of processing, mainly autophosphorylated on serine/threonine residues. Also autophosphorylated on Tyr-198. Post-translationally, it is uncertain whether palmitoylation is on Cys-6 and/or Cys-8. In terms of tissue distribution, ubiquitously expressed at very low levels.

Its subcellular location is the cytoplasm. It is found in the perinuclear region. The protein resides in the membrane. The enzyme catalyses L-seryl-[protein] + ATP = O-phospho-L-seryl-[protein] + ADP + H(+). The catalysed reaction is L-threonyl-[protein] + ATP = O-phospho-L-threonyl-[protein] + ADP + H(+). It catalyses the reaction L-tyrosyl-[protein] + ATP = O-phospho-L-tyrosyl-[protein] + ADP + H(+). Membrane-associated protein kinase that phosphorylates on serine and threonine residues. In vitro substrates include DRG1, ENO1 and EIF4EBP1. Also autophosphorylates. May be involved in secretory vesicle trafficking or intracellular signaling. May have a role in regulating stromal-epithelial interactions that occur during ductal morphogenesis in the mammary gland. May be involved in TGF-beta signaling. Able to autophosphorylate on Tyr residue; it is however unclear whether it has tyrosine-protein kinase toward other proteins. This is Serine/threonine-protein kinase 16 (STK16) from Homo sapiens (Human).